Reading from the N-terminus, the 94-residue chain is Late cornified envelope-like proline-rich protein 1 (94 aa).

Disordered stretches follow at residues Met1–Lys26 and Cys47–Glu94. Residues Pro53–Glu94 are compositionally biased toward pro residues.

The protein belongs to the cornifin (SPRR) family.

The protein is Late cornified envelope-like proline-rich protein 1 (LELP1) of Macaca fascicularis (Crab-eating macaque).